The sequence spans 78 residues: MSKVCQVTGKRPASGNNVSHAHNKTRRRFLPNLHTHRFWVEGENRWVKLKVSGKGLRMIDKLGIDQVLADMRTRGEKI.

Residues methionine 1–lysine 24 are disordered.

Belongs to the bacterial ribosomal protein bL28 family.

The sequence is that of Large ribosomal subunit protein bL28 from Nitrosococcus oceani (strain ATCC 19707 / BCRC 17464 / JCM 30415 / NCIMB 11848 / C-107).